A 204-amino-acid polypeptide reads, in one-letter code: Probable chorismate pyruvate-lyase (204 aa).

Substrate contacts are provided by R75, L113, and E160.

This sequence belongs to the UbiC family.

It is found in the cytoplasm. It catalyses the reaction chorismate = 4-hydroxybenzoate + pyruvate. It participates in cofactor biosynthesis; ubiquinone biosynthesis. Functionally, removes the pyruvyl group from chorismate, with concomitant aromatization of the ring, to provide 4-hydroxybenzoate (4HB) for the ubiquinone pathway. The protein is Probable chorismate pyruvate-lyase of Alcanivorax borkumensis (strain ATCC 700651 / DSM 11573 / NCIMB 13689 / SK2).